We begin with the raw amino-acid sequence, 753 residues long: Photosystem I P700 chlorophyll a apoprotein A1 (753 aa).

Helical transmembrane passes span 73 to 96, 159 to 182, 198 to 222, 294 to 312, 349 to 372, 388 to 414, 436 to 458, and 534 to 552; these read IFSA…FHAA, LYSA…YHYH, MTHH…HVSL, IAHH…GHMY, WHAQ…HHMY, LNLF…IFMV, TIIS…LYIH, and FMIH…LILI. Cysteine 576 and cysteine 585 together coordinate [4Fe-4S] cluster. 2 consecutive transmembrane segments (helical) span residues 592–613 and 667–689; these read HIFL…HFFW and LSAY…MFLF. Histidine 678 serves as a coordination point for chlorophyll a'. The chlorophyll a site is built by methionine 686 and tyrosine 694. Tryptophan 695 is a binding site for phylloquinone. Residues 727–747 form a helical membrane-spanning segment; that stretch reads AVGLGHYLLGGIVTSWSFYLA.

Belongs to the PsaA/PsaB family. In terms of assembly, the PsaA/B heterodimer binds the P700 chlorophyll special pair and subsequent electron acceptors. PSI consists of a core antenna complex that captures photons, and an electron transfer chain that converts photonic excitation into a charge separation. The cyanobacterial PSI reaction center is composed of one copy each of PsaA,B,C,D,E,F,I,J,K,L,M and X, and forms trimeric complexes. Requires PSI electron transfer chain: 5 chlorophyll a, 1 chlorophyll a', 2 phylloquinones and 3 4Fe-4S clusters. PSI core antenna: 90 chlorophyll a, 22 carotenoids, 3 phospholipids and 1 galactolipid. P700 is a chlorophyll a/chlorophyll a' dimer, A0 is one or more chlorophyll a, A1 is one or both phylloquinones and FX is a shared 4Fe-4S iron-sulfur center. as cofactor.

Its subcellular location is the cellular thylakoid membrane. It carries out the reaction reduced [plastocyanin] + hnu + oxidized [2Fe-2S]-[ferredoxin] = oxidized [plastocyanin] + reduced [2Fe-2S]-[ferredoxin]. Its function is as follows. PsaA and PsaB bind P700, the primary electron donor of photosystem I (PSI), as well as the electron acceptors A0, A1 and FX. PSI is a plastocyanin/cytochrome c6-ferredoxin oxidoreductase, converting photonic excitation into a charge separation, which transfers an electron from the donor P700 chlorophyll pair to the spectroscopically characterized acceptors A0, A1, FX, FA and FB in turn. Oxidized P700 is reduced on the lumenal side of the thylakoid membrane by plastocyanin or cytochrome c6. The polypeptide is Photosystem I P700 chlorophyll a apoprotein A1 (Acaryochloris marina (strain MBIC 11017)).